We begin with the raw amino-acid sequence, 101 residues long: Replication restart protein PriB (101 aa).

The region spanning 1 to 101 is the SSB domain; it reads MATNHLVLSG…LHAENVELKT (101 aa).

This sequence belongs to the PriB family. Homodimer. Interacts with PriA and DnaT. Component of the replication restart primosome. Primosome assembly occurs via a 'hand-off' mechanism. PriA binds to replication forks, subsequently PriB then DnaT bind; DnaT then displaces ssDNA to generate the helicase loading substrate.

Its function is as follows. Involved in the restart of stalled replication forks, which reloads the replicative helicase on sites other than the origin of replication; the PriA-PriB pathway is the major replication restart pathway. During primosome assembly it facilitates complex formation between PriA and DnaT on DNA; stabilizes PriA on DNA. Stimulates the DNA unwinding activity of PriA helicase. This is Replication restart protein PriB from Shewanella woodyi (strain ATCC 51908 / MS32).